A 354-amino-acid chain; its full sequence is Uroporphyrinogen decarboxylase (354 aa).

Residues 27–31 (RQAGR), Asp-77, Tyr-154, Thr-209, and His-327 contribute to the substrate site.

Belongs to the uroporphyrinogen decarboxylase family. As to quaternary structure, homodimer.

Its subcellular location is the cytoplasm. The catalysed reaction is uroporphyrinogen III + 4 H(+) = coproporphyrinogen III + 4 CO2. It functions in the pathway porphyrin-containing compound metabolism; protoporphyrin-IX biosynthesis; coproporphyrinogen-III from 5-aminolevulinate: step 4/4. Catalyzes the decarboxylation of four acetate groups of uroporphyrinogen-III to yield coproporphyrinogen-III. The sequence is that of Uroporphyrinogen decarboxylase from Escherichia coli (strain 55989 / EAEC).